The following is a 660-amino-acid chain: Bifunctional polymyxin resistance protein ArnA (660 aa).

Residues 1–304 (MKTVVFAYHD…TLGLVQGSRL (304 aa)) are formyltransferase ArnAFT. 86 to 88 (HLI) provides a ligand contact to (6R)-10-formyltetrahydrofolate. His104 acts as the Proton donor; for formyltransferase activity in catalysis. Residues Arg114 and 136–140 (VKRAD) each bind (6R)-10-formyltetrahydrofolate. Residues 314 to 660 (RRTRVLILGV…RTVDLTDKPS (347 aa)) are dehydrogenase ArnADH. NAD(+) contacts are provided by residues Asp347 and 368 to 369 (DI). Residues Ala393, Tyr398, and 432 to 433 (TS) each bind UDP-alpha-D-glucuronate. Catalysis depends on Glu434, which acts as the Proton acceptor; for decarboxylase activity. UDP-alpha-D-glucuronate-binding positions include Arg460, Asn492, 526-535 (KLIDGGKQKR), and Tyr613. Arg619 acts as the Proton donor; for decarboxylase activity in catalysis.

It in the N-terminal section; belongs to the Fmt family. UDP-L-Ara4N formyltransferase subfamily. This sequence in the C-terminal section; belongs to the NAD(P)-dependent epimerase/dehydratase family. UDP-glucuronic acid decarboxylase subfamily. As to quaternary structure, homohexamer, formed by a dimer of trimers.

The catalysed reaction is UDP-alpha-D-glucuronate + NAD(+) = UDP-beta-L-threo-pentopyranos-4-ulose + CO2 + NADH. It catalyses the reaction UDP-4-amino-4-deoxy-beta-L-arabinose + (6R)-10-formyltetrahydrofolate = UDP-4-deoxy-4-formamido-beta-L-arabinose + (6S)-5,6,7,8-tetrahydrofolate + H(+). It participates in nucleotide-sugar biosynthesis; UDP-4-deoxy-4-formamido-beta-L-arabinose biosynthesis; UDP-4-deoxy-4-formamido-beta-L-arabinose from UDP-alpha-D-glucuronate: step 1/3. Its pathway is nucleotide-sugar biosynthesis; UDP-4-deoxy-4-formamido-beta-L-arabinose biosynthesis; UDP-4-deoxy-4-formamido-beta-L-arabinose from UDP-alpha-D-glucuronate: step 3/3. The protein operates within bacterial outer membrane biogenesis; lipopolysaccharide biosynthesis. Its function is as follows. Bifunctional enzyme that catalyzes the oxidative decarboxylation of UDP-glucuronic acid (UDP-GlcUA) to UDP-4-keto-arabinose (UDP-Ara4O) and the addition of a formyl group to UDP-4-amino-4-deoxy-L-arabinose (UDP-L-Ara4N) to form UDP-L-4-formamido-arabinose (UDP-L-Ara4FN). The modified arabinose is attached to lipid A and is required for resistance to polymyxin and cationic antimicrobial peptides. The chain is Bifunctional polymyxin resistance protein ArnA from Escherichia coli O127:H6 (strain E2348/69 / EPEC).